A 241-amino-acid polypeptide reads, in one-letter code: Ribulose-phosphate 3-epimerase 2 (241 aa).

S21 provides a ligand contact to substrate. Residues H46, D48, and H79 each coordinate a divalent metal cation. The active-site Proton acceptor is D48. Residues H79, 155-158 (GFGG), 192-194 (DGG), and 214-215 (GS) contribute to the substrate site. D192 is an a divalent metal cation binding site. D192 functions as the Proton donor in the catalytic mechanism.

It belongs to the ribulose-phosphate 3-epimerase family. Requires a divalent metal cation as cofactor.

It carries out the reaction D-ribulose 5-phosphate = D-xylulose 5-phosphate. It functions in the pathway carbohydrate degradation. Its function is as follows. Catalyzes the reversible epimerization of D-ribulose 5-phosphate to D-xylulose 5-phosphate. The sequence is that of Ribulose-phosphate 3-epimerase 2 from Cupriavidus necator (strain ATCC 17699 / DSM 428 / KCTC 22496 / NCIMB 10442 / H16 / Stanier 337) (Ralstonia eutropha).